The following is a 420-amino-acid chain: 3-phosphoshikimate 1-carboxyvinyltransferase (420 aa).

3-phosphoshikimate contacts are provided by K26, S27, and R31. K26 provides a ligand contact to phosphoenolpyruvate. G97 and R125 together coordinate phosphoenolpyruvate. Residues S170, S171, Q172, D297, N320, and K324 each contribute to the 3-phosphoshikimate site. Q172 is a binding site for phosphoenolpyruvate. D297 serves as the catalytic Proton acceptor. Residues R328, R375, and K400 each contribute to the phosphoenolpyruvate site.

Belongs to the EPSP synthase family. As to quaternary structure, monomer.

It localises to the cytoplasm. It catalyses the reaction 3-phosphoshikimate + phosphoenolpyruvate = 5-O-(1-carboxyvinyl)-3-phosphoshikimate + phosphate. It functions in the pathway metabolic intermediate biosynthesis; chorismate biosynthesis; chorismate from D-erythrose 4-phosphate and phosphoenolpyruvate: step 6/7. Its function is as follows. Catalyzes the transfer of the enolpyruvyl moiety of phosphoenolpyruvate (PEP) to the 5-hydroxyl of shikimate-3-phosphate (S3P) to produce enolpyruvyl shikimate-3-phosphate and inorganic phosphate. This Rhizobium etli (strain ATCC 51251 / DSM 11541 / JCM 21823 / NBRC 15573 / CFN 42) protein is 3-phosphoshikimate 1-carboxyvinyltransferase.